The following is a 721-amino-acid chain: BBSome complex member BBS2 (721 aa).

Residues 325-369 (RGNLMDTSAEQDLIRELSQKKQNLLLELRNYEENAKAELASPLNE) adopt a coiled-coil conformation.

Part of BBSome complex, that contains BBS1, BBS2, BBS4, BBS5, BBS7, BBS8/TTC8, BBS9 and BBIP10. Interacts (via C-terminus) with BBS7. Interacts (via coiled coil domain) with MKKS. Interacts with CCDC28B and ALDOB. Interacts with DLEC1. In terms of tissue distribution, widely expressed.

Its subcellular location is the cell projection. The protein localises to the cilium membrane. It is found in the cytoplasm. The protein resides in the cytoskeleton. It localises to the microtubule organizing center. Its subcellular location is the centrosome. The protein localises to the centriolar satellite. The BBSome complex is thought to function as a coat complex required for sorting of specific membrane proteins to the primary cilia. The BBSome complex is required for ciliogenesis but is dispensable for centriolar satellite function. This ciliogenic function is mediated in part by the Rab8 GDP/GTP exchange factor, which localizes to the basal body and contacts the BBSome. Rab8(GTP) enters the primary cilium and promotes extension of the ciliary membrane. Firstly the BBSome associates with the ciliary membrane and binds to RAB3IP/Rabin8, the guanosyl exchange factor (GEF) for Rab8 and then the Rab8-GTP localizes to the cilium and promotes docking and fusion of carrier vesicles to the base of the ciliary membrane. The BBSome complex, together with the LTZL1, controls SMO ciliary trafficking and contributes to the sonic hedgehog (SHH) pathway regulation. Required for proper BBSome complex assembly and its ciliary localization. This Homo sapiens (Human) protein is BBSome complex member BBS2.